The chain runs to 214 residues: Large ribosomal subunit protein uL1 (214 aa).

It belongs to the universal ribosomal protein uL1 family. In terms of assembly, component of the large ribosomal subunit.

The protein localises to the cytoplasm. Its function is as follows. Component of the large ribosomal subunit. The ribosome is a large ribonucleoprotein complex responsible for the synthesis of proteins in the cell. This is Large ribosomal subunit protein uL1 (RPL10A) from Entamoeba histolytica (strain ATCC 30459 / HM-1:IMSS / ABRM).